Reading from the N-terminus, the 185-residue chain is Elongation factor P (185 aa).

This sequence belongs to the elongation factor P family.

The protein localises to the cytoplasm. Its pathway is protein biosynthesis; polypeptide chain elongation. Involved in peptide bond synthesis. Stimulates efficient translation and peptide-bond synthesis on native or reconstituted 70S ribosomes in vitro. Probably functions indirectly by altering the affinity of the ribosome for aminoacyl-tRNA, thus increasing their reactivity as acceptors for peptidyl transferase. This Bacillus cereus (strain G9842) protein is Elongation factor P.